We begin with the raw amino-acid sequence, 426 residues long: Bone morphogenetic protein 7 (426 aa).

Residues 1 to 22 form the signal peptide; sequence MNALTVKRRLPVLLFLFHISLS. Residues 23-282 constitute a propeptide that is removed on maturation; it reads SISSNTILEN…TSDIHLRSVR (260 aa). Residues Asn-177, Asn-307, and Asn-367 are each glycosylated (N-linked (GlcNAc...) asparagine). Intrachain disulfides connect Cys-325–Cys-391, Cys-354–Cys-423, and Cys-358–Cys-425.

This sequence belongs to the TGF-beta family. In terms of assembly, homodimer; disulfide-linked. Interacts with twsg1.

Its subcellular location is the secreted. Growth factor of the TGF-beta superfamily that plays important role in various biological processes, including embryogenesis, hematopoiesis, neurogenesis and skeletal morphogenesis. Initiates the canonical BMP signaling cascade by associating with type I receptor ACVR1 and type II receptor ACVR2A. Once all three components are bound together in a complex at the cell surface, ACVR2A phosphorylates and activates ACVR1. In turn, ACVR1 propagates signal by phosphorylating SMAD1/5/8 that travel to the nucleus and act as activators and repressors of transcription of target genes. In Xenopus laevis (African clawed frog), this protein is Bone morphogenetic protein 7 (bmp7).